The chain runs to 1310 residues: PAN2-PAN3 deadenylation complex catalytic subunit pan2 (1310 aa).

WD repeat units follow at residues 22 to 61, 67 to 105, 106 to 144, and 145 to 184; these read YHAG…RFTA, ETDG…SIRH, ESMQ…GEVV, and KELP…IKKQ. The tract at residues 318 to 463 is linker; it reads QFTEIGIPPR…NNDHWSLRPE (146 aa). One can recognise a USP domain in the interval 463-850; that stretch reads EAPPEYRICE…MPVVVMFQVK (388 aa). Zn(2+)-binding residues include H525, C530, C535, C538, C645, C648, C700, and C703. The 174-residue stretch at 897-1070 folds into the Exonuclease domain; it reads IAIDTEFIRL…EDAQTALKLY (174 aa). A divalent metal cation contacts are provided by D900, E902, D1009, and D1062. The disordered stretch occupies residues 1121–1169; the sequence is TPPVPAPGTTEGSFEISNSSTATTGGSALSATGGMGSASASSSMPSTPV. Over residues 1139 to 1168 the composition is skewed to low complexity; the sequence is SSTATTGGSALSATGGMGSASASSSMPSTP.

The protein belongs to the peptidase C19 family. PAN2 subfamily. In terms of assembly, forms a heterotrimer with an asymmetric homodimer of the regulatory subunit par-2/pan3 to form the poly(A)-nuclease (PAN) deadenylation complex. Requires a divalent metal cation as cofactor.

The protein localises to the cytoplasm. The enzyme catalyses Exonucleolytic cleavage of poly(A) to 5'-AMP.. With respect to regulation, positively regulated by the regulatory subunit par-2/pan3. In terms of biological role, catalytic subunit of the poly(A)-nuclease (PAN) deadenylation complex, one of two cytoplasmic mRNA deadenylases involved in mRNA turnover. PAN specifically shortens poly(A) tails of RNA and the activity is stimulated by poly(A)-binding protein pabp-1. PAN deadenylation is followed by rapid degradation of the shortened mRNA tails by the CCR4-NOT complex. Deadenylated mRNAs are then degraded by two alternative mechanisms, namely exosome-mediated 3'-5' exonucleolytic degradation, or deadenylation-dependent mRNA decaping and subsequent 5'-3' exonucleolytic degradation by rgb-30/xrn1. May also be involved in post-transcriptional maturation of mRNA poly(A) tails. The sequence is that of PAN2-PAN3 deadenylation complex catalytic subunit pan2 (par-1) from Neurospora crassa (strain ATCC 24698 / 74-OR23-1A / CBS 708.71 / DSM 1257 / FGSC 987).